A 413-amino-acid polypeptide reads, in one-letter code: Protein CDKN2AIP homolog B (413 aa).

An XRN2-binding (XTBD) domain is found at 21–118 (LERVRGQCES…TTRDELVAKV (98 aa)). Residues 118 to 266 (VKKRGNSSSN…PTRRFTTEHT (149 aa)) are disordered. Positions 183-193 (NKREAHSRTDV) are enriched in basic and acidic residues.

Belongs to the CARF family.

Its subcellular location is the nucleus. The protein localises to the nucleoplasm. May regulate DNA damage response and cell proliferation. This chain is Protein CDKN2AIP homolog B (cdkn2aip-b), found in Xenopus laevis (African clawed frog).